Here is a 31-residue protein sequence, read N- to C-terminus: Unknown protein from spot 104 of 2D-PAGE of thylakoid (31 aa).

Its subcellular location is the plastid. It is found in the chloroplast thylakoid. This is Unknown protein from spot 104 of 2D-PAGE of thylakoid from Pisum sativum (Garden pea).